Consider the following 184-residue polypeptide: Ribose 1,5-bisphosphate phosphokinase PhnN (184 aa).

11–18 is an ATP binding site; the sequence is GPSGAGKD.

The protein belongs to the ribose 1,5-bisphosphokinase family.

The enzyme catalyses alpha-D-ribose 1,5-bisphosphate + ATP = 5-phospho-alpha-D-ribose 1-diphosphate + ADP. Its pathway is metabolic intermediate biosynthesis; 5-phospho-alpha-D-ribose 1-diphosphate biosynthesis; 5-phospho-alpha-D-ribose 1-diphosphate from D-ribose 5-phosphate (route II): step 3/3. Functionally, catalyzes the phosphorylation of ribose 1,5-bisphosphate to 5-phospho-D-ribosyl alpha-1-diphosphate (PRPP). The polypeptide is Ribose 1,5-bisphosphate phosphokinase PhnN (Burkholderia mallei (strain SAVP1)).